Reading from the N-terminus, the 157-residue chain is uncharacterized protein (157 aa).

The signal sequence occupies residues 1–30 (MLPEQGPQPSTMPLWCLLAACTSLPRQAAT).

It localises to the secreted. This is an uncharacterized protein from Homo sapiens (Human).